Reading from the N-terminus, the 423-residue chain is Hydroxymethylglutaryl-CoA synthase-like protein AKT4-1 (423 aa).

Belongs to the thiolase-like superfamily. HMG-CoA synthase family.

The protein operates within mycotoxin biosynthesis. Its function is as follows. Hydroxymethylglutaryl-CoA synthase-like protein; part of the gene clusters that mediate the biosynthesis of the host-selective toxins (HSTs) AK-toxins responsible for Japanese pear black spot disease by the Japanese pear pathotype. AK-toxins are esters of 9,10-epoxy 8-hydroxy 9-methyldecatrienoic acid (EDA). On cellular level, AK-toxins affect plasma membrane of susceptible cells and cause a sudden increase in loss of K(+) after a few minutes of toxin treatment. The acyl-CoA ligase AKT1, the hydrolase AKT2 and enoyl-CoA hydratase AKT3 are all involved in the biosynthesis of the AK-, AF- and ACT-toxin common 9,10-epoxy-8-hydroxy-9-methyl-decatrienoic acid (EDA) structural moiety. Part of the EDA biosynthesis occurs in the peroxisome since these 3 enzymes are localized in peroxisomes. The exact roles of the 3 enzymes, as well as of additional AK-toxin clusters enzymes, including AKT4, AKT6 and AKTS1, have still to be elucidated. The Cytochrome P450 monooxygenase AKT7 on the other side functions to limit production of EDA and AK-toxin, probably via the catalysis of a side reaction of EDA or its precursor. In Alternaria alternata (Alternaria rot fungus), this protein is Hydroxymethylglutaryl-CoA synthase-like protein AKT4-1.